Reading from the N-terminus, the 353-residue chain is ATPase GET3 (353 aa).

Residue 26-33 (KGGVGKTT) coordinates ATP. Asp-57 is an active-site residue. ATP-binding residues include Glu-244 and Asn-271. Cys-284 and Cys-287 together coordinate Zn(2+).

This sequence belongs to the arsA ATPase family. As to quaternary structure, homodimer. Component of the Golgi to ER traffic (GET) complex, which is composed of GET1, GET2 and GET3. Within the complex, GET1 and GET2 form a heterotetramer which is stabilized by phosphatidylinositol binding and which binds to the GET3 homodimer. Interacts with the chloride channel protein GEF1.

The protein localises to the cytoplasm. The protein resides in the endoplasmic reticulum. It is found in the golgi apparatus. Its function is as follows. ATPase required for the post-translational delivery of tail-anchored (TA) proteins to the endoplasmic reticulum. Recognizes and selectively binds the transmembrane domain of TA proteins in the cytosol. This complex then targets to the endoplasmic reticulum by membrane-bound receptors GET1 and GET2, where the tail-anchored protein is released for insertion. This process is regulated by ATP binding and hydrolysis. ATP binding drives the homodimer towards the closed dimer state, facilitating recognition of newly synthesized TA membrane proteins. ATP hydrolysis is required for insertion. Subsequently, the homodimer reverts towards the open dimer state, lowering its affinity for the GET1-GET2 receptor, and returning it to the cytosol to initiate a new round of targeting. Cooperates with the HDEL receptor ERD2 to mediate the ATP-dependent retrieval of resident ER proteins that contain a C-terminal H-D-E-L retention signal from the Golgi to the ER. Involved in low-level resistance to the oxyanions arsenite and arsenate, and in heat tolerance. In Zygosaccharomyces rouxii (strain ATCC 2623 / CBS 732 / NBRC 1130 / NCYC 568 / NRRL Y-229), this protein is ATPase GET3.